Here is a 132-residue protein sequence, read N- to C-terminus: Small ribosomal subunit protein uS8 (132 aa).

This sequence belongs to the universal ribosomal protein uS8 family. In terms of assembly, part of the 30S ribosomal subunit. Contacts proteins S5 and S12.

In terms of biological role, one of the primary rRNA binding proteins, it binds directly to 16S rRNA central domain where it helps coordinate assembly of the platform of the 30S subunit. The protein is Small ribosomal subunit protein uS8 of Francisella tularensis subsp. holarctica (strain FTNF002-00 / FTA).